We begin with the raw amino-acid sequence, 430 residues long: Gamma-glutamyl phosphate reductase (430 aa).

This sequence belongs to the gamma-glutamyl phosphate reductase family.

The protein resides in the cytoplasm. The enzyme catalyses L-glutamate 5-semialdehyde + phosphate + NADP(+) = L-glutamyl 5-phosphate + NADPH + H(+). It participates in amino-acid biosynthesis; L-proline biosynthesis; L-glutamate 5-semialdehyde from L-glutamate: step 2/2. Catalyzes the NADPH-dependent reduction of L-glutamate 5-phosphate into L-glutamate 5-semialdehyde and phosphate. The product spontaneously undergoes cyclization to form 1-pyrroline-5-carboxylate. The sequence is that of Gamma-glutamyl phosphate reductase from Rhodopseudomonas palustris (strain ATCC BAA-98 / CGA009).